Reading from the N-terminus, the 199-residue chain is Large ribosomal subunit protein uL18 (199 aa).

It belongs to the universal ribosomal protein uL18 family. In terms of assembly, part of the 50S ribosomal subunit. Contacts the 5S and 23S rRNAs.

Functionally, this is one of the proteins that bind and probably mediate the attachment of the 5S RNA into the large ribosomal subunit, where it forms part of the central protuberance. This is Large ribosomal subunit protein uL18 from Saccharolobus solfataricus (strain ATCC 35092 / DSM 1617 / JCM 11322 / P2) (Sulfolobus solfataricus).